Consider the following 386-residue polypeptide: Ferredoxin--NADP reductase (386 aa).

In terms of domain architecture, CpcD-like spans Ser-9–Leu-67. In terms of domain architecture, FAD-binding FR-type spans Asn-104 to Leu-228. FAD is bound by residues Arg-163 to Ser-166, Cys-184 to Arg-186, Tyr-190, Val-202 to Ser-204, and Thr-243. NADP(+)-binding residues include Ser-166 and Arg-186. NADP(+)-binding positions include Thr-243, Val-275–Ala-276, Ser-305–Arg-306, Lys-315–Gln-319, Gly-344–Leu-345, and Glu-384.

It belongs to the ferredoxin--NADP reductase type 1 family. The cofactor is FAD.

Its subcellular location is the cellular thylakoid membrane. It catalyses the reaction 2 reduced [2Fe-2S]-[ferredoxin] + NADP(+) + H(+) = 2 oxidized [2Fe-2S]-[ferredoxin] + NADPH. The sequence is that of Ferredoxin--NADP reductase (petH) from Thermosynechococcus vestitus (strain NIES-2133 / IAM M-273 / BP-1).